Here is a 1403-residue protein sequence, read N- to C-terminus: MAHYFKVDLDEEFERFMKELSDDSFENSNKTPRQPNEDNKEMKKKDPVPWWIAEDDFEDDGLLGTNVSYLKTKKTYQPVMDTEEESAEKVQFLKSSGTSILSVDSLEANELVVSEPHHSTLGLGLDTLEEQEEKEQFFARLEKGLTSSIDYSKLNQELDSDDSAQLKALHRYPRNTEPAEDGCENESEQEELPETYSDDFEDAEDADDPLITKDEETHPKENSESGKDSFPKQEEEKTGMLANVVLLDSFDSVEDVGLSSQEKATPKAKAPPEITDDGPAETGVPYGQSSGDTEALHQAYCHVAHSLGDTGEPRIEASTVQTVRSSIKDGLQENEESSKNVSTTESDLPTVEELMQPIRIDSYGIRAFDLQPISLKKATDSKEAESVGSLPLKTNTNTVSQDTRHAIQFPHKHDESVVLHRTADEGMGSSCPATEEHLDKMYLEILKKKTSVNPSLLPQDDKMNQTSRSQLGAGEEVPVIGKQVPCKKARSTPSLPKRKPQSGLYASARSSGYGKPSSPLQLFSALEKKTSKDNTKTKSVRSIPTSNQFRKREILSGTKLIKPAASNKPSPHREGSPATPKRPEDPSDDSFVQLQTEPLGSYGGNREKELLMLKRAQDAEEKWTGAQALMEQMKMTFCEKEKELENTVESLKRQQERELFRLNQENYILQAKLSSFEETSRKQRWLQFGETSDPLTGEKLKQIQKEIQEQETLLQGYQQENERLYNQVKDLQEQNKKNEERMFKENQNLFSELASLKEQMHKNHFLSQAVENTEPTKNQSFTDLLAELRAAQKEKNHLMEDIKRLKQDKQALEVDLEKVKRERDQAKDQIAYATGEKLYEIKILEETHKQEVSRLQKRLQWYAENQELLDRDAARLREANEETEKLRLEIEKLKTESGSPATQQRLRSKERALDAKRIQDLERQVKEMEGILKRRYPNSLPALILAASAAGDSVDRNTVEFMERRIKKLEADLEGKDEEAKKSLRTMEQQFQKMKIQYEQRLEEQEQLLAHRQKEAPQSQRNSSSRLKALETELGDIKEAHQITVRKLEAEIDVLKHQNADLEHKKNDKGDQGLQSIEFQVEQAQARAKLARLNEELAAKGREIQDLTKTVERLQKERRMMLSRQIPRSREETAAKRLKKDPNRGHGNAFPETLDGKLYHPHTFTDSHISEVLEENYRLRSELEGLILERSKLKMESEAAVCQLENSMKRVKDDAAAHIASLKASHEREIEKLLCQNAIENSSSKVAELNRKIATQEVLLKHFQGQVNELQGKQESLAVSQVREEILQKQITKLLEELKEAKENHTPEMKHFMGLERKIKQMEMRHRQREQELQQIIQQTRQVVETEQNKEVEKWKRLAQLKNRELDKFRTELDSILDVLRELHRQGVVVPMALAGEENTAEF.

The tract at residues 20 to 46 (LSDDSFENSNKTPRQPNEDNKEMKKKD) is disordered. The span at 35–46 (PNEDNKEMKKKD) shows a compositional bias: basic and acidic residues. 2 positions are modified to phosphoserine: S160 and S163. 4 disordered regions span residues 169-243 (LHRY…MLAN), 256-292 (VGLSSQEKATPKAKAPPEITDDGPAETGVPYGQSSGD), 306-348 (SLGD…ESDL), and 453-606 (NPSL…GGNR). A compositionally biased stretch (acidic residues) spans 178-208 (PAEDGCENESEQEELPETYSDDFEDAEDADD). Positions 210–238 (LITKDEETHPKENSESGKDSFPKQEEEKT) are enriched in basic and acidic residues. Residues 485-500 (PCKKARSTPSLPKRKP) show a composition bias toward basic residues. Composition is skewed to basic and acidic residues over residues 526–536 (LEKKTSKDNTK) and 571–585 (PHREGSPATPKRPED). Positions 614 to 1124 (KRAQDAEEKW…QKERRMMLSR (511 aa)) form a coiled coil. Positions 1126-1147 (IPRSREETAAKRLKKDPNRGHG) are disordered. Positions 1128-1144 (RSREETAAKRLKKDPNR) are enriched in basic and acidic residues. A coiled-coil region spans residues 1174-1386 (EENYRLRSEL…LDVLRELHRQ (213 aa)).

This sequence belongs to the CEP162 family. As to quaternary structure, interacts with CPNE4. Interacts with alpha-tubulin. Interacts with CEP290.

The protein resides in the cytoplasm. The protein localises to the cytoskeleton. It localises to the microtubule organizing center. It is found in the centrosome. Its subcellular location is the centriole. The protein resides in the spindle. The protein localises to the nucleus. Functionally, required to promote assembly of the transition zone in primary cilia. Acts by specifically recognizing and binding the axonemal microtubule. Localizes to the distal ends of centrioles before ciliogenesis and directly binds to axonemal microtubule, thereby promoting and restricting transition zone formation specifically at the cilia base. Required to mediate CEP290 association with microtubules. This Mus musculus (Mouse) protein is Centrosomal protein of 162 kDa (Cep162).